Reading from the N-terminus, the 395-residue chain is Galactokinase (395 aa).

Position 39-42 (39-42) interacts with substrate; the sequence is EHTD. ATP-binding positions include Ser-73 and 127–133; that span reads GAGLSSS. Mg(2+)-binding residues include Ser-133 and Glu-165. Catalysis depends on Asp-177, which acts as the Proton acceptor. Position 227 (Tyr-227) interacts with substrate.

The protein belongs to the GHMP kinase family. GalK subfamily.

The protein resides in the cytoplasm. It catalyses the reaction alpha-D-galactose + ATP = alpha-D-galactose 1-phosphate + ADP + H(+). It functions in the pathway carbohydrate metabolism; galactose metabolism. Functionally, catalyzes the transfer of the gamma-phosphate of ATP to D-galactose to form alpha-D-galactose-1-phosphate (Gal-1-P). This is Galactokinase from Halalkalibacterium halodurans (strain ATCC BAA-125 / DSM 18197 / FERM 7344 / JCM 9153 / C-125) (Bacillus halodurans).